The sequence spans 351 residues: DNA polymerase IV (351 aa).

The UmuC domain maps to 4–185 (IIHVDMDCFY…LPLGKIPGVG (182 aa)). Mg(2+) contacts are provided by D8 and D103. Residue E104 is part of the active site.

Belongs to the DNA polymerase type-Y family. Monomer. Mg(2+) is required as a cofactor.

It localises to the cytoplasm. The catalysed reaction is DNA(n) + a 2'-deoxyribonucleoside 5'-triphosphate = DNA(n+1) + diphosphate. Its function is as follows. Poorly processive, error-prone DNA polymerase involved in untargeted mutagenesis. Copies undamaged DNA at stalled replication forks, which arise in vivo from mismatched or misaligned primer ends. These misaligned primers can be extended by PolIV. Exhibits no 3'-5' exonuclease (proofreading) activity. May be involved in translesional synthesis, in conjunction with the beta clamp from PolIII. The protein is DNA polymerase IV of Citrobacter koseri (strain ATCC BAA-895 / CDC 4225-83 / SGSC4696).